The chain runs to 288 residues: Alpha-acetolactate decarboxylase (288 aa).

An N-terminal signal peptide occupies residues 1–23; sequence MNIKYFLIFLILLAVTSFTLFSG.

It belongs to the alpha-acetolactate decarboxylase family.

It carries out the reaction (2S)-2-acetolactate + H(+) = (R)-acetoin + CO2. It functions in the pathway polyol metabolism; (R,R)-butane-2,3-diol biosynthesis; (R,R)-butane-2,3-diol from pyruvate: step 2/3. In terms of biological role, converts acetolactate into acetoin. The sequence is that of Alpha-acetolactate decarboxylase from Methanosarcina mazei (strain ATCC BAA-159 / DSM 3647 / Goe1 / Go1 / JCM 11833 / OCM 88) (Methanosarcina frisia).